Here is a 113-residue protein sequence, read N- to C-terminus: Nucleoid-associated protein CLH_3225 (113 aa).

Residues 1–14 (MAKGGFPGGFGGGN) show a composition bias toward gly residues. A disordered region spans residues 1 to 31 (MAKGGFPGGFGGGNMNNLMKQAQKLQKQMED).

This sequence belongs to the YbaB/EbfC family. As to quaternary structure, homodimer.

Its subcellular location is the cytoplasm. The protein resides in the nucleoid. Binds to DNA and alters its conformation. May be involved in regulation of gene expression, nucleoid organization and DNA protection. This Clostridium botulinum (strain Alaska E43 / Type E3) protein is Nucleoid-associated protein CLH_3225.